Here is a 91-residue protein sequence, read N- to C-terminus: Small ribosomal subunit protein bS20 (91 aa).

The protein belongs to the bacterial ribosomal protein bS20 family.

Its function is as follows. Binds directly to 16S ribosomal RNA. This chain is Small ribosomal subunit protein bS20, found in Mycoplasma mobile (strain ATCC 43663 / 163K / NCTC 11711) (Mesomycoplasma mobile).